We begin with the raw amino-acid sequence, 523 residues long: Sialate O-acetylesterase (523 aa).

A signal peptide spans 1–23 (MVAPGLVLGLVLPLILWADRSAG). N-linked (GlcNAc...) asparagine glycosylation is found at N107, N138, N267, N290, N401, and N422.

As to expression, widely expressed with high expression in the testis, prostate, and colon.

It is found in the lysosome. The protein resides in the cytoplasm. The catalysed reaction is N-acetyl-9-O-acetylneuraminate + H2O = N-acetylneuraminate + acetate + H(+). It catalyses the reaction an Ac-O-9-sialoglycoconjugate + H2O = a sialoglycoconjugate + acetate + H(+). Catalyzes the removal of O-acetyl ester groups from position 9 of the free diacetylated sialate N-acetyl-9-O-acetylneuraminate (Neu5,9Ac2) in the cytosol and of the diacetylated sialate residues of sialylglycoconjugates in the lysosomes. Together with the sialate-O-acetyltransferase they regulate the balance of acetylated sialoglycoconjugates, key players in various processes such as cell-cell interactions, host-pathogen recognition, and tumor antigenicity. This is Sialate O-acetylesterase (SIAE) from Homo sapiens (Human).